A 673-amino-acid polypeptide reads, in one-letter code: Forkhead box protein O3 (673 aa).

The interval 1–153 (MAEAPASPAP…SGQPRKCSSR (153 aa)) is disordered. S30 bears the Phosphoserine; by AMPK mark. Phosphothreonine; by PKB/AKT1 is present on T32. Residue K46 is modified to N6-methyllysine. Positions 57–68 (IPEEEDDEDDED) are enriched in acidic residues. The segment covering 79–89 (IGGGGGSGTLG) has biased composition (gly residues). Residues 80–108 (GGGGGSGTLGSGLLLEDSARVLAPGGQDP) form a required for mitochondrial import region. Residue K149 is modified to N6-methyllysine. A DNA-binding region (fork-head) is located at residues 157-251 (WGNLSYADLI…KSGKAPRRRA (95 aa)). Residue T179 is modified to Phosphothreonine; by AMPK. At S209 the chain carries Phosphoserine; by STK4/MST1. S215 is subject to Phosphoserine; by MAPKAPK5. Residue K230 is modified to N6-methyllysine. The interval 231–302 (SSWWIINPDG…GSPTSRSSDE (72 aa)) is disordered. Position 242 is an N6-acetyllysine (K242). Positions 242 to 259 (KSGKAPRRRAVSMDNSNK) match the Nuclear localization signal motif. Residue S253 is modified to Phosphoserine; by PKB/AKT1 and MAPKAPK5. The span at 261–272 (TKSRGRAAKKKA) shows a compositional bias: basic residues. K262 and K271 each carry N6-methyllysine. 2 positions are modified to phosphoserine: S280 and S284. The segment covering 283-298 (DSPSQLSKWPGSPTSR) has biased composition (polar residues). An N6-methyllysine modification is found at K290. The residue at position 294 (S294) is a Phosphoserine. At S299 the chain carries Phosphoserine; by CaMK2A. Residues 300–673 (SDELDAWTDF…QASSQSWVPG (374 aa)) are mediates interaction with CHUK/IKKA and IKBKB/IKKB. The residue at position 311 (S311) is a Phosphoserine. S315 carries the post-translational modification Phosphoserine; by SGK1. 2 positions are modified to phosphoserine; by AMPK: S399 and S413. Position 419 is an N6-methyllysine (K419). S421 carries the phosphoserine modification. Positions 536-587 (HQHQTQGALGGSRALSNSVSNMGLSESSSLGSAKHQQQSPVSQSMQTLSDSL) are disordered. Over residues 549-582 (ALSNSVSNMGLSESSSLGSAKHQQQSPVSQSMQT) the composition is skewed to polar residues. S551 is modified (phosphoserine; by MAPKAPK5). S555 carries the phosphoserine; by AMPK and MAPKAPK5 modification. Phosphoserine; by AMPK occurs at positions 588 and 626. At S644 the chain carries Phosphoserine; by IKKB.

As to quaternary structure, upon metabolic stress, forms a complex composed of FOXO3, SIRT3 and mitochondrial RNA polymerase POLRMT; the complex is recruited to mtDNA in a SIRT3-dependent manner. Also forms a complex composed of FOXO3, SIRT3, TFAM and POLRMT. Interacts with SIRT2; the interaction occurs independently of SIRT2 deacetylase activity. Interacts with YWHAB/14-3-3-beta and YWHAZ/14-3-3-zeta, which are required for cytosolic sequestration. Upon oxidative stress, interacts with STK4/MST1, which disrupts interaction with YWHAB/14-3-3-beta and leads to nuclear translocation. Interacts with PIM1. Interacts with DDIT3/CHOP. Interacts (deacetylated form) with SKP2. Interacts with CHUK and IKBKB. Interacts with CAMK2A, CAMK2B and calcineurin A. Interacts with NUPR1; this interaction represses FOXO3 transactivation. In terms of processing, in the presence of survival factors such as IGF1, phosphorylated on Thr-32 and Ser-253 by AKT1/PKB. This phosphorylated form then interacts with 14-3-3 proteins and is retained in the cytoplasm. Survival factor withdrawal induces dephosphorylation and promotes translocation to the nucleus where the dephosphorylated protein induces transcription of target genes and triggers apoptosis. Although AKT1/PKB doesn't appear to phosphorylate Ser-315 directly, it may activate other kinases that trigger phosphorylation at this residue. Phosphorylated by STK4/MST1 on Ser-209 upon oxidative stress, which leads to dissociation from YWHAB/14-3-3-beta and nuclear translocation. Phosphorylated by PIM1. Phosphorylation by AMPK leads to the activation of transcriptional activity without affecting subcellular localization. In response to metabolic stress, phosphorylated by AMPK on Ser-30 which mediates FOXO3 mitochondrial translocation. Phosphorylation by MAPKAPK5 promotes nuclear localization and DNA-binding, leading to induction of miR-34b and miR-34c expression, 2 post-transcriptional regulators of MYC that bind to the 3'UTR of MYC transcript and prevent its translation. Phosphorylated by CHUK/IKKA and IKBKB/IKKB. TNF-induced inactivation of FOXO3 requires its phosphorylation at Ser-644 by IKBKB/IKKB which promotes FOXO3 retention in the cytoplasm, polyubiquitination and ubiquitin-mediated proteasomal degradation. May be dephosphorylated by calcineurin A on Ser-299 which abolishes FOXO3 transcriptional activity. In cancer cells, ERK mediated-phosphorylation of Ser-12 is required for mitochondrial translocation of FOXO3 in response to metabolic stress or chemotherapeutic agents. Phosphorylation at Ser-253 promotes its degradation by the proteasome. Dephosphorylation at Ser-253 by protein phosphatase 2A (PPP2CA) promotes its stabilization; interaction with PPP2CA is enhanced by AMBRA1. Post-translationally, deacetylation by SIRT1 or SIRT2 stimulates interaction of FOXO3 with SKP2 and facilitates SCF(SKP2)-mediated FOXO3 ubiquitination and proteasomal degradation. Deacetylation by SIRT2 stimulates FOXO3-mediated transcriptional activity in response to oxidative stress. Deacetylated by SIRT3. Deacetylation by SIRT3 stimulates FOXO3-mediated mtDNA transcriptional activity in response to metabolic stress. Heavily methylated by SET9 which decreases stability, while moderately increasing transcriptional activity. The main methylation site is Lys-271. Methylation doesn't affect subcellular location. In terms of processing, polyubiquitinated. Ubiquitinated by a SCF complex containing SKP2, leading to proteasomal degradation. Post-translationally, the N-terminus is cleaved following import into the mitochondrion. In terms of tissue distribution, ubiquitous.

It is found in the cytoplasm. The protein resides in the cytosol. The protein localises to the nucleus. Its subcellular location is the mitochondrion matrix. It localises to the mitochondrion outer membrane. Its function is as follows. Transcriptional activator that recognizes and binds to the DNA sequence 5'-[AG]TAAA[TC]A-3' and regulates different processes, such as apoptosis and autophagy. Acts as a positive regulator of autophagy in skeletal muscle: in starved cells, enters the nucleus following dephosphorylation and binds the promoters of autophagy genes, such as GABARAP1L, MAP1LC3B and ATG12, thereby activating their expression, resulting in proteolysis of skeletal muscle proteins. Triggers apoptosis in the absence of survival factors, including neuronal cell death upon oxidative stress. Participates in post-transcriptional regulation of MYC: following phosphorylation by MAPKAPK5, promotes induction of miR-34b and miR-34c expression, 2 post-transcriptional regulators of MYC that bind to the 3'UTR of MYC transcript and prevent its translation. In response to metabolic stress, translocates into the mitochondria where it promotes mtDNA transcription. In response to metabolic stress, translocates into the mitochondria where it promotes mtDNA transcription. Also acts as a key regulator of chondrogenic commitment of skeletal progenitor cells in response to lipid availability: when lipids levels are low, translocates to the nucleus and promotes expression of SOX9, which induces chondrogenic commitment and suppresses fatty acid oxidation. Also acts as a key regulator of regulatory T-cells (Treg) differentiation by activating expression of FOXP3. The sequence is that of Forkhead box protein O3 from Homo sapiens (Human).